Here is a 341-residue protein sequence, read N- to C-terminus: Thromboxane A2 receptor (341 aa).

The Extracellular segment spans residues Met1 to Trp29. Asn4 and Asn16 each carry an N-linked (GlcNAc...) asparagine glycan. The helical transmembrane segment at Phe30 to Ala52 threads the bilayer. Over Arg53–Leu65 the chain is Cytoplasmic. A helical transmembrane segment spans residues Leu66 to Ser86. The Extracellular segment spans residues Gln87 to His105. A disulfide bridge connects residues Cys104 and Cys181. The chain crosses the membrane as a helical span at residues Phe106 to Ala127. Topologically, residues Glu128 to Ala147 are cytoplasmic. A helical transmembrane segment spans residues Trp148–Gly170. Topologically, residues Arg171–Asp191 are extracellular. A helical transmembrane segment spans residues Val192–Val217. Residues Ala218–Leu244 are Cytoplasmic-facing. The chain crosses the membrane as a helical span at residues Val245 to Gln268. Topologically, residues Thr269–Leu287 are extracellular. A helical membrane pass occupies residues Leu288 to Arg309. At Arg310–Pro341 the chain is on the cytoplasmic side. The residue at position 328 (Ser328) is a Phosphoserine.

This sequence belongs to the G-protein coupled receptor 1 family. As to quaternary structure, interacts with RPGRIP1L. Interacts with RACK1; the interaction regulates TBXA2R cell surface expression. As to expression, in the brain, expressed in all types of glial cells. In the kidney, expressed in the mesangial cells of the glomerulus, smooth muscle cells of the renal arterioles, and in transitional cell epithelium of renal pelvis.

It localises to the cell membrane. Receptor for thromboxane A2 (TXA2), a potent stimulator of platelet aggregation. The activity of this receptor is mediated by a G-protein that activates a phosphatidylinositol-calcium second messenger system. In the kidney, the binding of TXA2 to glomerular TP receptors causes intense vasoconstriction. Activates phospholipase C and adenylyl cyclase. The polypeptide is Thromboxane A2 receptor (Tbxa2r) (Rattus norvegicus (Rat)).